The sequence spans 95 residues: Aspartyl/glutamyl-tRNA(Asn/Gln) amidotransferase subunit C (95 aa).

It belongs to the GatC family. As to quaternary structure, heterotrimer of A, B and C subunits.

The enzyme catalyses L-glutamyl-tRNA(Gln) + L-glutamine + ATP + H2O = L-glutaminyl-tRNA(Gln) + L-glutamate + ADP + phosphate + H(+). It carries out the reaction L-aspartyl-tRNA(Asn) + L-glutamine + ATP + H2O = L-asparaginyl-tRNA(Asn) + L-glutamate + ADP + phosphate + 2 H(+). In terms of biological role, allows the formation of correctly charged Asn-tRNA(Asn) or Gln-tRNA(Gln) through the transamidation of misacylated Asp-tRNA(Asn) or Glu-tRNA(Gln) in organisms which lack either or both of asparaginyl-tRNA or glutaminyl-tRNA synthetases. The reaction takes place in the presence of glutamine and ATP through an activated phospho-Asp-tRNA(Asn) or phospho-Glu-tRNA(Gln). The chain is Aspartyl/glutamyl-tRNA(Asn/Gln) amidotransferase subunit C from Beijerinckia indica subsp. indica (strain ATCC 9039 / DSM 1715 / NCIMB 8712).